The chain runs to 503 residues: Probable cytosol aminopeptidase (503 aa).

Mn(2+)-binding residues include K274 and D279. Residue K286 is part of the active site. Residues D297, D356, and E358 each contribute to the Mn(2+) site. Residue R360 is part of the active site.

It belongs to the peptidase M17 family. Requires Mn(2+) as cofactor.

It localises to the cytoplasm. The catalysed reaction is Release of an N-terminal amino acid, Xaa-|-Yaa-, in which Xaa is preferably Leu, but may be other amino acids including Pro although not Arg or Lys, and Yaa may be Pro. Amino acid amides and methyl esters are also readily hydrolyzed, but rates on arylamides are exceedingly low.. It catalyses the reaction Release of an N-terminal amino acid, preferentially leucine, but not glutamic or aspartic acids.. Its function is as follows. Presumably involved in the processing and regular turnover of intracellular proteins. Catalyzes the removal of unsubstituted N-terminal amino acids from various peptides. The chain is Probable cytosol aminopeptidase from Burkholderia cenocepacia (strain ATCC BAA-245 / DSM 16553 / LMG 16656 / NCTC 13227 / J2315 / CF5610) (Burkholderia cepacia (strain J2315)).